Reading from the N-terminus, the 129-residue chain is Small ribosomal subunit protein uS11 (129 aa).

Belongs to the universal ribosomal protein uS11 family. Part of the 30S ribosomal subunit. Interacts with proteins S7 and S18. Binds to IF-3.

Located on the platform of the 30S subunit, it bridges several disparate RNA helices of the 16S rRNA. Forms part of the Shine-Dalgarno cleft in the 70S ribosome. This Phocaeicola vulgatus (strain ATCC 8482 / DSM 1447 / JCM 5826 / CCUG 4940 / NBRC 14291 / NCTC 11154) (Bacteroides vulgatus) protein is Small ribosomal subunit protein uS11.